Here is a 205-residue protein sequence, read N- to C-terminus: N-(5'-phosphoribosyl)anthranilate isomerase (205 aa).

The protein belongs to the TrpF family.

The enzyme catalyses N-(5-phospho-beta-D-ribosyl)anthranilate = 1-(2-carboxyphenylamino)-1-deoxy-D-ribulose 5-phosphate. It participates in amino-acid biosynthesis; L-tryptophan biosynthesis; L-tryptophan from chorismate: step 3/5. The polypeptide is N-(5'-phosphoribosyl)anthranilate isomerase (Trichlorobacter lovleyi (strain ATCC BAA-1151 / DSM 17278 / SZ) (Geobacter lovleyi)).